A 680-amino-acid polypeptide reads, in one-letter code: DNA-directed RNA polymerase subunit beta' (680 aa).

4 residues coordinate Zn(2+): C69, C71, C87, and C90. Positions 489, 491, and 493 each coordinate Mg(2+).

The protein belongs to the RNA polymerase beta' chain family. RpoC1 subfamily. In terms of assembly, in plastids the minimal PEP RNA polymerase catalytic core is composed of four subunits: alpha, beta, beta', and beta''. When a (nuclear-encoded) sigma factor is associated with the core the holoenzyme is formed, which can initiate transcription. Mg(2+) serves as cofactor. The cofactor is Zn(2+).

It is found in the plastid. The protein resides in the chloroplast. The enzyme catalyses RNA(n) + a ribonucleoside 5'-triphosphate = RNA(n+1) + diphosphate. Its function is as follows. DNA-dependent RNA polymerase catalyzes the transcription of DNA into RNA using the four ribonucleoside triphosphates as substrates. The chain is DNA-directed RNA polymerase subunit beta' from Lepidium virginicum (Virginia pepperweed).